The following is a 402-amino-acid chain: NADH-quinone oxidoreductase subunit D (402 aa).

Belongs to the complex I 49 kDa subunit family. As to quaternary structure, NDH-1 is composed of 14 different subunits. Subunits NuoB, C, D, E, F, and G constitute the peripheral sector of the complex.

It localises to the cell inner membrane. The catalysed reaction is a quinone + NADH + 5 H(+)(in) = a quinol + NAD(+) + 4 H(+)(out). NDH-1 shuttles electrons from NADH, via FMN and iron-sulfur (Fe-S) centers, to quinones in the respiratory chain. The immediate electron acceptor for the enzyme in this species is believed to be ubiquinone. Couples the redox reaction to proton translocation (for every two electrons transferred, four hydrogen ions are translocated across the cytoplasmic membrane), and thus conserves the redox energy in a proton gradient. The sequence is that of NADH-quinone oxidoreductase subunit D from Xanthobacter autotrophicus (strain ATCC BAA-1158 / Py2).